The primary structure comprises 265 residues: Adenosylcobinamide-GDP ribazoletransferase (265 aa).

7 consecutive transmembrane segments (helical) span residues 40-60, 67-87, 121-141, 150-170, 191-211, 213-233, and 243-263; these read IAYA…VVLV, LPAF…TGAF, GGCA…ALVA, LALV…LLAL, LACA…GFGI, TAFA…RLSG, and VAGA…LIFP.

It belongs to the CobS family. Mg(2+) is required as a cofactor.

The protein resides in the cell inner membrane. It catalyses the reaction alpha-ribazole + adenosylcob(III)inamide-GDP = adenosylcob(III)alamin + GMP + H(+). It carries out the reaction alpha-ribazole 5'-phosphate + adenosylcob(III)inamide-GDP = adenosylcob(III)alamin 5'-phosphate + GMP + H(+). The protein operates within cofactor biosynthesis; adenosylcobalamin biosynthesis; adenosylcobalamin from cob(II)yrinate a,c-diamide: step 7/7. Joins adenosylcobinamide-GDP and alpha-ribazole to generate adenosylcobalamin (Ado-cobalamin). Also synthesizes adenosylcobalamin 5'-phosphate from adenosylcobinamide-GDP and alpha-ribazole 5'-phosphate. This Xanthobacter autotrophicus (strain ATCC BAA-1158 / Py2) protein is Adenosylcobinamide-GDP ribazoletransferase.